Here is a 474-residue protein sequence, read N- to C-terminus: tRNA-2-methylthio-N(6)-dimethylallyladenosine synthase (474 aa).

An MTTase N-terminal domain is found at 3-120 (KKLHIKTWGC…LPEMIEQVRR (118 aa)). [4Fe-4S] cluster-binding residues include C12, C49, C83, C157, C161, and C164. One can recognise a Radical SAM core domain in the interval 143–375 (RAEGPTAFVS…QDRITQQAMR (233 aa)). A TRAM domain is found at 378–441 (RHMMGTVQRI…TNSLRGVFIR (64 aa)).

The protein belongs to the methylthiotransferase family. MiaB subfamily. As to quaternary structure, monomer. Requires [4Fe-4S] cluster as cofactor.

It is found in the cytoplasm. The enzyme catalyses N(6)-dimethylallyladenosine(37) in tRNA + (sulfur carrier)-SH + AH2 + 2 S-adenosyl-L-methionine = 2-methylsulfanyl-N(6)-dimethylallyladenosine(37) in tRNA + (sulfur carrier)-H + 5'-deoxyadenosine + L-methionine + A + S-adenosyl-L-homocysteine + 2 H(+). Functionally, catalyzes the methylthiolation of N6-(dimethylallyl)adenosine (i(6)A), leading to the formation of 2-methylthio-N6-(dimethylallyl)adenosine (ms(2)i(6)A) at position 37 in tRNAs that read codons beginning with uridine. The protein is tRNA-2-methylthio-N(6)-dimethylallyladenosine synthase of Shewanella baltica (strain OS155 / ATCC BAA-1091).